The sequence spans 455 residues: Probable glycine dehydrogenase (decarboxylating) subunit 1 (455 aa).

It belongs to the GcvP family. N-terminal subunit subfamily. In terms of assembly, the glycine cleavage system is composed of four proteins: P, T, L and H. In this organism, the P 'protein' is a heterodimer of two subunits.

The catalysed reaction is N(6)-[(R)-lipoyl]-L-lysyl-[glycine-cleavage complex H protein] + glycine + H(+) = N(6)-[(R)-S(8)-aminomethyldihydrolipoyl]-L-lysyl-[glycine-cleavage complex H protein] + CO2. In terms of biological role, the glycine cleavage system catalyzes the degradation of glycine. The P protein binds the alpha-amino group of glycine through its pyridoxal phosphate cofactor; CO(2) is released and the remaining methylamine moiety is then transferred to the lipoamide cofactor of the H protein. The protein is Probable glycine dehydrogenase (decarboxylating) subunit 1 of Francisella tularensis subsp. novicida (strain U112).